A 166-amino-acid chain; its full sequence is MSVLSLSDLPSRFTFSSESSSSSSILFASTLASESRLSDLSTGSIRDSDCFSFNVHELNQSDEILEIDFRFFSKKKKNEHFSKRRKLSKVLTPPTNDEIKFVNRHTGSKPQPNFYSSSESSEKELIWFQPKMRVFLQSLSNMSYLSPSKFRYTTVYSKQPNACCIV.

This is an uncharacterized protein from Schizosaccharomyces pombe (strain 972 / ATCC 24843) (Fission yeast).